A 262-amino-acid chain; its full sequence is Phosphatidylglycerol--prolipoprotein diacylglyceryl transferase 1 (262 aa).

4 helical membrane-spanning segments follow: residues 15–35, 40–60, 83–103, and 108–128; these read WYGI…SINA, LNFD…IIGA, QGGL…FIYC, and VDFL…QGIG. Residue arginine 129 participates in a 1,2-diacyl-sn-glycero-3-phospho-(1'-sn-glycerol) binding. The next 3 membrane-spanning stretches (helical) occupy residues 169 to 189, 197 to 217, and 229 to 249; these read TFLY…IILY, GVVI…IEGL, and VAQL…IIIV.

Belongs to the Lgt family.

It is found in the cell membrane. The enzyme catalyses L-cysteinyl-[prolipoprotein] + a 1,2-diacyl-sn-glycero-3-phospho-(1'-sn-glycerol) = an S-1,2-diacyl-sn-glyceryl-L-cysteinyl-[prolipoprotein] + sn-glycerol 1-phosphate + H(+). The protein operates within protein modification; lipoprotein biosynthesis (diacylglyceryl transfer). In terms of biological role, catalyzes the transfer of the diacylglyceryl group from phosphatidylglycerol to the sulfhydryl group of the N-terminal cysteine of a prolipoprotein, the first step in the formation of mature lipoproteins. The protein is Phosphatidylglycerol--prolipoprotein diacylglyceryl transferase 1 of Clostridium perfringens (strain 13 / Type A).